The chain runs to 409 residues: Na(+)-translocating NADH-quinone reductase subunit F (409 aa).

A helical transmembrane segment spans residues 5-25 (FIFGIIAFTALVLVLAVIILF). A 2Fe-2S ferredoxin-type domain is found at 34–128 (GDITISINDD…SMDVELPEEI (95 aa)). The [2Fe-2S] cluster site is built by C71, C77, C80, and C112. The 141-residue stretch at 131-271 (VKKWECTVIS…SGPFGEFFAK (141 aa)) folds into the FAD-binding FR-type domain.

The protein belongs to the NqrF family. Composed of six subunits; NqrA, NqrB, NqrC, NqrD, NqrE and NqrF. [2Fe-2S] cluster is required as a cofactor. FAD serves as cofactor.

It is found in the cell inner membrane. The catalysed reaction is a ubiquinone + n Na(+)(in) + NADH + H(+) = a ubiquinol + n Na(+)(out) + NAD(+). Functionally, NQR complex catalyzes the reduction of ubiquinone-1 to ubiquinol by two successive reactions, coupled with the transport of Na(+) ions from the cytoplasm to the periplasm. The first step is catalyzed by NqrF, which accepts electrons from NADH and reduces ubiquinone-1 to ubisemiquinone by a one-electron transfer pathway. The sequence is that of Na(+)-translocating NADH-quinone reductase subunit F from Haemophilus ducreyi (strain 35000HP / ATCC 700724).